We begin with the raw amino-acid sequence, 561 residues long: Cation diffusion facilitator family protein 1 (561 aa).

Residues 1-20 show a composition bias toward basic and acidic residues; the sequence is MEVTMEDRSVKADKADRDDN. Positions 1–26 are disordered; sequence MEVTMEDRSVKADKADRDDNNTTSTE. Topologically, residues 1–112 are cytoplasmic; that stretch reads MEVTMEDRSV…SESVKGVSRS (112 aa). A helical transmembrane segment spans residues 113–133; that stretch reads LIIQIGMTVIFCALEFITGVV. Over 134–136 the chain is Extracellular; the sequence is CSS. A helical transmembrane segment spans residues 137–157; it reads IAMLADSYHMAADVMALIVAF. Topologically, residues 158–176 are cytoplasmic; it reads TCIKIATRPSTRLGYGWVR. A helical membrane pass occupies residues 177 to 197; that stretch reads AETLGGFFNGIFMCTVCVLVF. At 198–215 the chain is on the extracellular side; that stretch reads QEAVGRIINVHMITHPLQ. A helical transmembrane segment spans residues 216–236; that stretch reads VLVIGFIGLLINLFGMFNLSG. At 237–391 the chain is on the cytoplasmic side; it reads HGHSHGGGSH…NVNIHGVWLH (155 aa). The disordered stretch occupies residues 240 to 304; sequence SHGGGSHGHS…HTRLNGKFRS (65 aa). Residues 246–270 are 6 X 2 AA approximate repeats of H-G; that stretch reads HGHSHGGSHGHSHNNKKTKKNDGHG. The span at 247–264 shows a compositional bias: basic residues; it reads GHSHGGSHGHSHNNKKTK. Residues 392 to 412 form a helical membrane-spanning segment; it reads LLSDAFGSVIVMISAGFVYFL. Topologically, residues 413-420 are extracellular; it reads PTWKIAAY. A helical membrane pass occupies residues 421–441; the sequence is LDPILSISLASIMGFTAVVLV. Residues 442–561 are Cytoplasmic-facing; sequence KTSGEKLLKQ…SVSTENEITE (120 aa).

The protein belongs to the cation diffusion facilitator (CDF) transporter (TC 2.A.4) family. SLC30A subfamily. As to quaternary structure, interacts with lin-45 in a zinc-dependent manner. As to expression, expressed in intestinal cells. Expressed in the vulva.

The protein resides in the basolateral cell membrane. Its function is as follows. Involved in the regulation of Pn.p cell fate determination. Involved in zinc metabolism and the decrease of the cytosolic zinc concentration which is thought to modulate Ras signaling. Involved in zinc transport from the intestinal lumen to the pseudocoelum. In Caenorhabditis elegans, this protein is Cation diffusion facilitator family protein 1 (cdf-1).